The sequence spans 677 residues: Zinc finger and BTB domain-containing protein 5 (677 aa).

Positions 24–93 (CDCVIVVGNR…MYTSTLMLGE (70 aa)) constitute a BTB domain. Residues 158-181 (LNSSQNGEEQPAPMSSSMRSNLDQ) are compositionally biased toward polar residues. 2 disordered regions span residues 158 to 252 (LNSS…MTDN) and 287 to 312 (SMAS…SFQC). A Phosphoserine modification is found at Ser234. Residue Lys239 forms a Glycyl lysine isopeptide (Lys-Gly) (interchain with G-Cter in SUMO2) linkage. Polar residues predominate over residues 287–300 (SMASRATQVETSFD). Glycyl lysine isopeptide (Lys-Gly) (interchain with G-Cter in SUMO2) cross-links involve residues Lys322 and Lys330. The segment at 331-387 (SEPLSSPEPQDEVSDVTSQAEGSESVEVEGVVVSAEKIDLSPESSDRSFSDPQSSTD) is disordered. The segment covering 350–365 (AEGSESVEVEGVVVSA) has biased composition (low complexity). Residues 366–379 (EKIDLSPESSDRSF) show a composition bias toward basic and acidic residues. Ser371 is subject to Phosphoserine. Residues Lys404 and Lys415 each participate in a glycyl lysine isopeptide (Lys-Gly) (interchain with G-Cter in SUMO2) cross-link. Residues 447 to 474 (LLSPEAGPAGGPSSAPGSHVENPFSEPA) form a disordered region. Residues 449-464 (SPEAGPAGGPSSAPGS) show a composition bias toward low complexity. Residue Lys541 forms a Glycyl lysine isopeptide (Lys-Gly) (interchain with G-Cter in SUMO2) linkage. Residues 552–576 (QIPENSTSSQLMMNGATSSFENGHP) show a composition bias toward polar residues. Residues 552-585 (QIPENSTSSQLMMNGATSSFENGHPSQPGPPQLT) are disordered. Residues Lys594 and Lys597 each participate in a glycyl lysine isopeptide (Lys-Gly) (interchain with G-Cter in SUMO2) cross-link. The C2H2-type 1 zinc finger occupies 613–635 (YACKICCKTFLTLTDCKKHIRVH). The C2H2-type 2; atypical zinc-finger motif lies at 641 to 664 (YACLKCGKRFSQSSHLYKHSKTTC). Glycyl lysine isopeptide (Lys-Gly) (interchain with G-Cter in SUMO2) cross-links involve residues Lys645 and Lys658.

Its subcellular location is the nucleus. Its function is as follows. May be involved in transcriptional regulation. The sequence is that of Zinc finger and BTB domain-containing protein 5 (ZBTB5) from Homo sapiens (Human).